Reading from the N-terminus, the 330-residue chain is Protein RecA (330 aa).

66–73 (GPESSGKT) is an ATP binding site.

Belongs to the RecA family.

It is found in the cytoplasm. Can catalyze the hydrolysis of ATP in the presence of single-stranded DNA, the ATP-dependent uptake of single-stranded DNA by duplex DNA, and the ATP-dependent hybridization of homologous single-stranded DNAs. It interacts with LexA causing its activation and leading to its autocatalytic cleavage. This chain is Protein RecA, found in Bacteroides thetaiotaomicron (strain ATCC 29148 / DSM 2079 / JCM 5827 / CCUG 10774 / NCTC 10582 / VPI-5482 / E50).